Consider the following 418-residue polypeptide: Secreted aspartic protease 6 (418 aa).

An N-terminal signal peptide occupies residues 1–18 (MFLKNILSVLRFALLIDA). Positions 19–76 (APVKRSPGFVTLDFNVKRSLVVPDDPTAESKRSPLFLDLDPTQIPVDDTGRNVGVDKR) are cleaved as a propeptide — activation peptide. A Peptidase A1 domain is found at 90–404 (YSADITVGSN…DLDDKKISMA (315 aa)). Residue aspartate 108 is part of the active site. Position 108–110 (108–110 (DTG)) interacts with pepstatin A. The cysteines at positions 123 and 135 are disulfide-linked. N-linked (GlcNAc...) asparagine glycosylation occurs at asparagine 138. Aspartate 268 provides a ligand contact to Zn(2+). Aspartate 294 is a catalytic residue. Position 294–298 (294–298 (DSGTT)) interacts with pepstatin A. A disulfide bridge links cysteine 332 with cysteine 370.

This sequence belongs to the peptidase A1 family.

It is found in the secreted. It catalyses the reaction Preferential cleavage at the carboxyl of hydrophobic amino acids, but fails to cleave 15-Leu-|-Tyr-16, 16-Tyr-|-Leu-17 and 24-Phe-|-Phe-25 of insulin B chain. Activates trypsinogen, and degrades keratin.. Its activity is regulated as follows. Inhibited by pepstatin A analogs. In terms of biological role, secreted aspartic peptidases (SAPs) are a group of ten acidic hydrolases considered as key virulence factors. These enzymes supply the fungus with nutrient amino acids as well as are able to degrade the selected host's proteins involved in the immune defense. Moreover, acts toward human hemoglobin though limited proteolysis to generate a variety of antimicrobial hemocidins, enabling to compete with the other microorganisms of the same physiological niche using the microbicidal peptides generated from the host protein. This Candida albicans (Yeast) protein is Secreted aspartic protease 6.